The following is a 329-amino-acid chain: Probable ABC transporter permease protein MG188 homolog (329 aa).

6 helical membrane passes run 30 to 50 (FLLF…PFFL), 96 to 116 (IISL…IVFV), 128 to 148 (VFFL…IYIL), 176 to 196 (ALWG…VLVI), 234 to 254 (LIFL…ISLF), and 283 to 303 (NFAG…GLVL). An ABC transmembrane type-1 domain is found at 88–303 (LRNSFLYSII…ILGVCYGLVL (216 aa)).

It belongs to the binding-protein-dependent transport system permease family. MalFG subfamily.

The protein resides in the cell membrane. In terms of biological role, probably part of a binding-protein-dependent transport system. Probably responsible for the translocation of the substrate across the membrane. The protein is Probable ABC transporter permease protein MG188 homolog of Mycoplasma pneumoniae (strain ATCC 29342 / M129 / Subtype 1) (Mycoplasmoides pneumoniae).